Here is a 227-residue protein sequence, read N- to C-terminus: Octanoyltransferase (227 aa).

The BPL/LPL catalytic domain occupies 43 to 218; sequence ADSQDELWIV…TFTKTLGYQE (176 aa). Substrate contacts are provided by residues 82-89, 149-151, and 162-164; these read RGGQVTYH, SLG, and GLA. The active-site Acyl-thioester intermediate is the cysteine 180.

It belongs to the LipB family.

Its subcellular location is the cytoplasm. The catalysed reaction is octanoyl-[ACP] + L-lysyl-[protein] = N(6)-octanoyl-L-lysyl-[protein] + holo-[ACP] + H(+). It functions in the pathway protein modification; protein lipoylation via endogenous pathway; protein N(6)-(lipoyl)lysine from octanoyl-[acyl-carrier-protein]: step 1/2. Catalyzes the transfer of endogenously produced octanoic acid from octanoyl-acyl-carrier-protein onto the lipoyl domains of lipoate-dependent enzymes. Lipoyl-ACP can also act as a substrate although octanoyl-ACP is likely to be the physiological substrate. In Shewanella denitrificans (strain OS217 / ATCC BAA-1090 / DSM 15013), this protein is Octanoyltransferase.